The chain runs to 223 residues: FAD-dependent monooxygenase imqC (223 aa).

FAD is bound by residues 139-141 (RFY), Y189, and D210.

This sequence belongs to the PheA/TfdB FAD monooxygenase family.

It participates in secondary metabolite biosynthesis. Its function is as follows. FAD-dependent monooxygenase; part of the gene cluster that mediates the biosynthesis of imizoquins A to D, tripeptide-derived alkaloids that serve a protective role against oxidative stress that are essential for normal germination. ImqB is a canonical three-module NRPS that assembles the tripeptide backbone of the imizoquins via condensation of Trp, Tyr, and Leu-derived precursors. N-methylation by imqF and phenol oxidation by imqC, followed by cyclization via the FAD-dependent oxidase imqH carry out the three-step transformation of L-tyrosine into tetrahydroisoquinoline. Importantly, this sequence requires the presence of a free amine in the tyrosine moiety, indicating that isoquinoline formation occurs prior to peptide bond formation. The imidazolidin-4-one ring of imizoquins could form following additional oxidation of the methyl-derived bridgehead carbon by imqH. Lastly, O-methylation by imqG and leucine hydroxylation by imqE complete biosynthesis of the imizoquins. The sequence is that of FAD-dependent monooxygenase imqC from Aspergillus flavus (strain ATCC 200026 / FGSC A1120 / IAM 13836 / NRRL 3357 / JCM 12722 / SRRC 167).